A 59-amino-acid chain; its full sequence is uncharacterized protein (59 aa).

It localises to the mitochondrion. This is an uncharacterized protein from Ascobolus immersus.